Here is an 86-residue protein sequence, read N- to C-terminus: Molybdopterin synthase sulfur carrier subunit (86 aa).

Position 86 is a 1-thioglycine; alternate (Gly86). Gly86 carries the post-translational modification Glycyl adenylate; alternate.

Belongs to the MoaD family. MOCS2A subfamily. As to quaternary structure, heterotetramer; composed of 2 small (mocs2s) and 2 large (mocs2l) subunits. In terms of processing, C-terminal thiocarboxylation occurs in 2 steps, it is first acyl-adenylated (-COAMP) via the hesA/moeB/thiF part of mocs3, then thiocarboxylated (-COSH) via the rhodanese domain of mocs3.

It localises to the cytoplasm. Its pathway is cofactor biosynthesis; molybdopterin biosynthesis. In terms of biological role, acts as a sulfur carrier required for molybdopterin biosynthesis. Component of the molybdopterin synthase complex that catalyzes the conversion of precursor Z into molybdopterin by mediating the incorporation of 2 sulfur atoms into precursor Z to generate a dithiolene group. In the complex, serves as sulfur donor by being thiocarboxylated (-COSH) at its C-terminus by mocs3. After interaction with mocs2l, the sulfur is then transferred to precursor Z to form molybdopterin. This chain is Molybdopterin synthase sulfur carrier subunit (mocs2s), found in Dictyostelium discoideum (Social amoeba).